A 303-amino-acid polypeptide reads, in one-letter code: Glutathione transport system permease protein GsiD (303 aa).

Helical transmembrane passes span Q37–A57, L105–L125, L144–I164, A165–G185, T208–M228, I230–P250, and V266–F286. The ABC transmembrane type-1 domain occupies A101–G290.

This sequence belongs to the binding-protein-dependent transport system permease family. The complex is composed of two ATP-binding proteins (GsiA), two transmembrane proteins (GsiC and GsiD) and a solute-binding protein (GsiB).

The protein resides in the cell inner membrane. Its function is as follows. Part of the ABC transporter complex GsiABCD involved in glutathione import. Probably responsible for the translocation of the substrate across the membrane. This is Glutathione transport system permease protein GsiD from Salmonella paratyphi A (strain ATCC 9150 / SARB42).